The chain runs to 132 residues: MRRNETPEGRSVRLLRVGEQVRHALSDILMRGEVHDDVLASHMVSVTEVRMSPDLRHATVFVKPLLGGDEDIVIKALRTNTAFLQSEVARRVNTKYAAKLKFLADESFDEGSHIDRLLRDPSIARDLDQDAD.

It belongs to the RbfA family. As to quaternary structure, monomer. Binds 30S ribosomal subunits, but not 50S ribosomal subunits or 70S ribosomes.

The protein resides in the cytoplasm. Its function is as follows. One of several proteins that assist in the late maturation steps of the functional core of the 30S ribosomal subunit. Associates with free 30S ribosomal subunits (but not with 30S subunits that are part of 70S ribosomes or polysomes). Required for efficient processing of 16S rRNA. May interact with the 5'-terminal helix region of 16S rRNA. The sequence is that of Ribosome-binding factor A from Rhizorhabdus wittichii (strain DSM 6014 / CCUG 31198 / JCM 15750 / NBRC 105917 / EY 4224 / RW1) (Sphingomonas wittichii).